A 245-amino-acid chain; its full sequence is Lactate utilization protein A 1 (245 aa).

The protein belongs to the LutA/YkgE family.

Is involved in L-lactate degradation and allows cells to grow with lactate as the sole carbon source. This Bacillus mycoides (strain KBAB4) (Bacillus weihenstephanensis) protein is Lactate utilization protein A 1.